We begin with the raw amino-acid sequence, 511 residues long: Probable cytochrome P450 4d21 (511 aa).

A heme-binding site is contributed by C456.

Belongs to the cytochrome P450 family. It depends on heme as a cofactor.

The protein localises to the endoplasmic reticulum membrane. It localises to the microsome membrane. May be involved in the metabolism of insect hormones and in the breakdown of synthetic insecticides. This chain is Probable cytochrome P450 4d21 (Cyp4d21), found in Drosophila melanogaster (Fruit fly).